The primary structure comprises 917 residues: Probable dipeptidyl-aminopeptidase B (917 aa).

Positions 1 to 16 are enriched in basic and acidic residues; the sequence is MATEKGHGRDDEERVP. The interval 1 to 21 is disordered; the sequence is MATEKGHGRDDEERVPLTRGS. Over 1-99 the chain is Cytoplasmic; sequence MATEKGHGRD…KPMHKSVKIA (99 aa). Residues 100–120 traverse the membrane as a helical; Signal-anchor for type II membrane protein segment; that stretch reads LWTLLFLSLGGWSLAFVLFIF. Residues 121–917 are Vacuolar-facing; it reads RSHDTYETPI…RAATWAGLSI (797 aa). Residues N135, N351, and N574 are each glycosylated (N-linked (GlcNAc...) asparagine). S756 serves as the catalytic Charge relay system. N815 carries an N-linked (GlcNAc...) asparagine glycan. Residues D833 and H866 each act as charge relay system in the active site. N-linked (GlcNAc...) asparagine glycosylation is present at N902.

This sequence belongs to the peptidase S9B family.

The protein resides in the vacuole membrane. The enzyme catalyses Release of an N-terminal dipeptide, Xaa-Yaa-|-Zaa-, from a polypeptide, preferentially when Yaa is Pro, provided Zaa is neither Pro nor hydroxyproline.. Its function is as follows. Type IV dipeptidyl-peptidase which removes N-terminal dipeptides sequentially from polypeptides having unsubstituted N-termini provided that the penultimate residue is proline. This chain is Probable dipeptidyl-aminopeptidase B (DAPB), found in Ajellomyces capsulatus (strain H88) (Darling's disease fungus).